We begin with the raw amino-acid sequence, 345 residues long: Heat-inducible transcription repressor HrcA (345 aa).

It belongs to the HrcA family.

Negative regulator of class I heat shock genes (grpE-dnaK-dnaJ and groELS operons). Prevents heat-shock induction of these operons. This Lachnoclostridium phytofermentans (strain ATCC 700394 / DSM 18823 / ISDg) (Clostridium phytofermentans) protein is Heat-inducible transcription repressor HrcA.